We begin with the raw amino-acid sequence, 1132 residues long: Ubiquitin-associated protein 2 (1132 aa).

The tract at residues 1–29 (MMTSVSNDRCRGAREKPQMPTAHAAQSQK) is disordered. Positions 8–17 (DRCRGAREKP) are enriched in basic and acidic residues. Residues 48 to 92 (KNDSDFEAKVKQLMEVTGKNQDECIVALHDCNGDVNKAINILLEG) form the UBA domain. Disordered regions lie at residues 95-202 (DTTS…YSES), 221-248 (GTDE…YGLK), 331-351 (NNQM…SPQS), 380-479 (LKPP…STVS), 602-679 (TSSA…VSTL), 713-749 (PLSQ…VEST), 875-919 (PYSG…LNPG), 996-1033 (GGYG…GSVY), 1040-1059 (DKQG…SALG), and 1087-1132 (PHSQ…YWTN). The span at 109–130 (FGRESSENKENREKRTEREASR) shows a compositional bias: basic and acidic residues. Arg166 bears the Omega-N-methylarginine mark. Residues 168–182 (KRARGRGFGRGRGRG) are compositionally biased toward basic residues. 2 stretches are compositionally biased toward polar residues: residues 233–244 (HSMSQEPPSKSS) and 331–340 (NNQMAPGTAN). The segment covering 341–351 (STSASSYSPQS) has biased composition (low complexity). The span at 392 to 404 (SSAQQNDTASPPA) shows a compositional bias: polar residues. Phosphoserine occurs at positions 433 and 440. Low complexity-rich tracts occupy residues 436 to 448 (LSQL…HQTQ) and 602 to 618 (TSSA…SSSY). Polar residues predominate over residues 619–630 (DQSSVHTRIAYQ). Phosphoserine is present on Ser631. A compositionally biased stretch (low complexity) spans 631–644 (SSASPPDSAPGSVA). The segment covering 652–662 (SQHTVDTTSSV) has biased composition (polar residues). Residues 713–722 (PLSQLSSSLS) show a composition bias toward low complexity. Residues 723–742 (GHQNSMTSAHATRSTSTPHT) show a composition bias toward polar residues. Residues 897-914 (PAQAQQSQSQTHHTAQQP) show a composition bias toward low complexity. Low complexity predominate over residues 1101–1115 (PSGSGQRSQPSSLQP). A compositionally biased stretch (polar residues) spans 1116-1132 (KSQASKPTYGSAPYWTN).

As to quaternary structure, may interact with ANXA2.

The protein localises to the nucleus. The protein resides in the chromosome. It localises to the cytoplasm. Its function is as follows. Recruits the ubiquitination machinery to RNA polymerase II for polyubiquitination, removal and degradation, when the transcription-coupled nucleotide excision repair (TC-NER) machinery fails to resolve DNA damage. May promote the degradation of ANXA2. The chain is Ubiquitin-associated protein 2 from Mus musculus (Mouse).